We begin with the raw amino-acid sequence, 437 residues long: MAQSKPAYKVADIKLADFGRKEIILAENEMPGLMAMRSKYGPSQPLKGARIAGCLHMTIQTAVLIETLTALGAEVQWSSCNIFSTQDHAAAAIAQTGVPVYAWKGETDEEYEWCIEQTIVFKDGQPLNMILDDGGDLTNLVHAKYPQYLAGIRGLSEETTTGVHNLAKMLAKGDLKVPAINVNDSVTKSKFDNLYGIRESLPDGIKRATDVMLAGKVAVVAGYGDVGKGSAASLKAFGSRVIVTEIDPINALQAAMEGYEVTTLEEAAPKANIIVTTTGCKDIVTGKHFELLPNDAIVCNVGHFDCEIDVKWLNTNATKKDTIKPQVDRYTLKNGRHVILLAEGRLVNLGCATGHPSFVMSNSFTNQVLAQVELWTKFGTPQEYKLGLYVLPKTLDEEVAYLHLAQLGVKLTKLSDEQASYLGVPVAGPYKPDHYRY.

T58, D133, and E158 together coordinate substrate. T159–T161 serves as a coordination point for NAD(+). The substrate site is built by K188 and D192. NAD(+) contacts are provided by residues N193, G224 to G229, E245, V301 to H303, and N348.

This sequence belongs to the adenosylhomocysteinase family. As to quaternary structure, homotetramer. It depends on NAD(+) as a cofactor.

The catalysed reaction is S-adenosyl-L-homocysteine + H2O = L-homocysteine + adenosine. The protein operates within amino-acid biosynthesis; L-homocysteine biosynthesis; L-homocysteine from S-adenosyl-L-homocysteine: step 1/1. Its function is as follows. Adenosylhomocysteine is a competitive inhibitor of S-adenosyl-L-methionine-dependent methyl transferase reactions; therefore adenosylhomocysteinase may play a key role in the control of methylations via regulation of the intracellular concentration of adenosylhomocysteine. The chain is Adenosylhomocysteinase (ahcy-1) from Caenorhabditis elegans.